We begin with the raw amino-acid sequence, 350 residues long: Inhibin beta E chain (350 aa).

The N-terminal stretch at 1 to 19 (MRLPDVQLWLVLLWALVRA) is a signal peptide. A propeptide spanning residues 20 to 236 (QGTGSVCPSC…EPGAGRARRR (217 aa)) is cleaved from the precursor. A glycan (N-linked (GlcNAc...) asparagine) is linked at Asn198. Intrachain disulfides connect Cys240–Cys248, Cys247–Cys315, Cys276–Cys347, and Cys280–Cys349.

The protein belongs to the TGF-beta family. Homodimeric or heterodimeric through association with alpha and beta subunits, linked by one or more disulfide bonds. Inhibins are heterodimers of one alpha and one beta subunit. Activins are homo- or heterodimers of beta subunits only.

It localises to the secreted. Functionally, inhibins and activins inhibit and activate, respectively, the secretion of follitropin by the pituitary gland. Inhibins/activins are involved in regulating a number of diverse functions such as hypothalamic and pituitary hormone secretion, gonadal hormone secretion, germ cell development and maturation, erythroid differentiation, insulin secretion, nerve cell survival, embryonic axial development or bone growth, depending on their subunit composition. Inhibins appear to oppose the functions of activins. In terms of biological role, activin E is a homodimer of INHBE secreted by the liver that plays a crucial role in regulating metabolic homeostasis particularly in lipid metabolism and energy homeostasis. Plays a central role in the regulation of adipose tissue lipolysis by preventing the influx of fatty acids from adipose tissue into the liver. Mechanistically, signals via ACVR1C to activate SMAD2/3 signaling, suppressing PPARG target genes in adipose tissue, thereby reducing liver lipid content and improving glycemic control. Induces beige adipocyte formation and thermogenesis in response to cold exposure. The chain is Inhibin beta E chain (INHBE) from Homo sapiens (Human).